Reading from the N-terminus, the 890-residue chain is Translation initiation factor IF-2 (890 aa).

The interval Leu45–Gln304 is disordered. The segment covering Ser67–Val81 has biased composition (polar residues). Positions Val92–Asp217 are enriched in basic and acidic residues. Positions Gly252–Asn266 are enriched in basic residues. Over residues Lys267 to Ala280 the composition is skewed to basic and acidic residues. The region spanning Pro389 to Lys558 is the tr-type G domain. The tract at residues Gly398 to Thr405 is G1. Gly398–Thr405 provides a ligand contact to GTP. The segment at Gly423–His427 is G2. Residues Asp444–Gly447 form a G3 region. GTP contacts are provided by residues Asp444–His448 and Asn498–Asp501. A G4 region spans residues Asn498–Asp501. The G5 stretch occupies residues Ser534–Lys536. An N6-acetyllysine modification is found at Lys808.

Belongs to the TRAFAC class translation factor GTPase superfamily. Classic translation factor GTPase family. IF-2 subfamily.

Its subcellular location is the cytoplasm. In terms of biological role, one of the essential components for the initiation of protein synthesis. Protects formylmethionyl-tRNA from spontaneous hydrolysis and promotes its binding to the 30S ribosomal subunits. Also involved in the hydrolysis of GTP during the formation of the 70S ribosomal complex. This Escherichia coli (strain SMS-3-5 / SECEC) protein is Translation initiation factor IF-2.